Here is a 1373-residue protein sequence, read N- to C-terminus: Insulin-like growth factor 1 receptor (1373 aa).

The N-terminal stretch at 1-30 (MKSGSGGGSPTSLWGLVFLSAALSLWPTSG) is a signal peptide. A disulfide bridge links cysteine 33 with cysteine 52. N-linked (GlcNAc...) asparagine glycosylation is found at asparagine 51, asparagine 102, and asparagine 135. 13 cysteine pairs are disulfide-bonded: cysteine 150/cysteine 178, cysteine 182/cysteine 205, cysteine 192/cysteine 211, cysteine 215/cysteine 224, cysteine 219/cysteine 230, cysteine 231/cysteine 239, cysteine 235/cysteine 248, cysteine 251/cysteine 260, cysteine 264/cysteine 276, cysteine 282/cysteine 303, cysteine 307/cysteine 321, cysteine 324/cysteine 328, and cysteine 332/cysteine 354. Asparagine 245 carries N-linked (GlcNAc...) asparagine glycosylation. N-linked (GlcNAc...) asparagine glycosylation is present at asparagine 314. Residues asparagine 418 and asparagine 439 are each glycosylated (N-linked (GlcNAc...) asparagine). Cysteine 456 and cysteine 489 are oxidised to a cystine. Fibronectin type-III domains follow at residues 490-610 (ESDV…TNAS), 611-709 (VPSI…TEAE), 735-829 (RPER…TMPA), and 835-928 (IPGP…VPAK). 9 N-linked (GlcNAc...) asparagine glycosylation sites follow: asparagine 535, asparagine 608, asparagine 623, asparagine 641, asparagine 748, asparagine 757, asparagine 765, asparagine 901, and asparagine 914. Over 742 to 936 (DVMQVANTTM…AKTTYENFMH (195 aa)) the chain is Extracellular. Residues 937–960 (LIIALPVAILLIVGGLVIMLYVFH) traverse the membrane as a helical segment. Residues 961 to 1373 (RKRNNSRLGN…ALPLPQSSTC (413 aa)) lie on the Cytoplasmic side of the membrane. Positions 978-981 (NPEY) match the IRS1- and SHC1-binding motif. Tyrosine 981 carries the phosphotyrosine modification. Residues 1000–1276 (ITMNRELGQG…SIKDEMEPSF (277 aa)) form the Protein kinase domain. ATP-binding positions include 1006–1014 (LGQGSFGMV) and lysine 1034. Aspartate 1137 serves as the catalytic Proton acceptor. A phosphotyrosine; by autocatalysis mark is found at tyrosine 1163, tyrosine 1167, and tyrosine 1168. Glycyl lysine isopeptide (Lys-Gly) (interchain with G-Cter in ubiquitin) cross-links involve residues lysine 1170 and lysine 1173. Serine 1280 carries the post-translational modification Phosphoserine; by GSK3-beta. The segment at 1283 to 1373 (YSEENKPPEP…ALPLPQSSTC (91 aa)) is disordered. At serine 1284 the chain carries Phosphoserine. The segment covering 1292–1305 (PEELEMELEMEPEN) has biased composition (acidic residues). Low complexity predominate over residues 1306 to 1322 (MESVPLDPSASSASLPL). Residues 1323–1332 (PERHSGHKAE) are compositionally biased toward basic and acidic residues.

The protein belongs to the protein kinase superfamily. Tyr protein kinase family. Insulin receptor subfamily. In terms of assembly, tetramer of 2 alpha and 2 beta chains linked by disulfide bonds. The alpha chains contribute to the formation of the ligand-binding domain, while the beta chain carries the kinase domain. Interacts with PIK3R1 and with the PTB/PID domains of IRS1 and SHC1 in vitro when autophosphorylated on tyrosine residues. Forms a hybrid receptor with INSR, the hybrid is a tetramer consisting of 1 alpha chain and 1 beta chain of INSR and 1 alpha chain and 1 beta chain of IGF1R. Interacts with ARRB1 and ARRB2. Interacts with GRB10. Interacts with RACK1. Interacts with SOCS1, SOCS2 and SOCS3. Interacts with 14-3-3 proteins. Interacts with NMD2. Interacts with MAP3K5. Interacts with STAT3. Found in a ternary complex with IGF1 and ITGAV:ITGB3 or ITGA6:ITGB4. Interacts (nascent precursor form) with ZFAND2B. In terms of processing, autophosphorylated on tyrosine residues in response to ligand binding. Autophosphorylation occurs in trans, i.e. one subunit of the dimeric receptor phosphorylates tyrosine residues on the other subunit. Autophosphorylation occurs in a sequential manner; Tyr-1167 is predominantly phosphorylated first, followed by phosphorylation of Tyr-1163 and Tyr-1168. While every single phosphorylation increases kinase activity, all three tyrosine residues in the kinase activation loop (Tyr-1163, Tyr-1167 and Tyr-1168) have to be phosphorylated for optimal activity. Can be autophosphorylated at additional tyrosine residues (in vitro). Autophosphorylated is followed by phosphorylation of juxtamembrane tyrosines and C-terminal serines. May also be phosphorylated at Tyr-1163 and Tyr-1168 by mTORC2. Phosphorylation of Tyr-981 is required for IRS1- and SHC1-binding. Phosphorylation of Ser-1280 by GSK-3beta restrains kinase activity and promotes cell surface expression, it requires a priming phosphorylation at Ser-1284. Dephosphorylated by PTPN1. Post-translationally, polyubiquitinated at Lys-1170 and Lys-1173 through both 'Lys-48' and 'Lys-29' linkages, promoting receptor endocytosis and subsequent degradation by the proteasome. Ubiquitination is facilitated by pre-existing phosphorylation. Sumoylated with SUMO1. In terms of processing, controlled by regulated intramembrane proteolysis (RIP). Undergoes metalloprotease-dependent constitutive ectodomain shedding to produce a membrane-anchored 52 kDa C-Terminal fragment which is further processed by presenilin gamma-secretase to yield an intracellular 50 kDa fragment.

It localises to the cell membrane. It catalyses the reaction L-tyrosyl-[protein] + ATP = O-phospho-L-tyrosyl-[protein] + ADP + H(+). With respect to regulation, activated by autophosphorylation at Tyr-1163, Tyr-1167 and Tyr-1168 on the kinase activation loop; phosphorylation at all three tyrosine residues is required for optimal kinase activity. Inhibited by MSC1609119A-1, BMS-754807, PQIP, benzimidazole pyridinone, isoquinolinedione, bis-azaindole, 3-cyanoquinoline, 2,4-bis-arylamino-1,3-pyrimidine, pyrrolopyrimidine, pyrrole-5-carboxaldehyde, picropodophyllin (PPP), tyrphostin derivatives. While most inhibitors bind to the ATP binding pocket, MSC1609119A-1 functions as allosteric inhibitor and binds close to the DFG motif and the activation loop. Its function is as follows. Receptor tyrosine kinase which mediates actions of insulin-like growth factor 1 (IGF1). Binds IGF1 with high affinity and IGF2 and insulin (INS) with a lower affinity. The activated IGF1R is involved in cell growth and survival control. IGF1R is crucial for tumor transformation and survival of malignant cell. Ligand binding activates the receptor kinase, leading to receptor autophosphorylation, and tyrosines phosphorylation of multiple substrates, that function as signaling adapter proteins including, the insulin-receptor substrates (IRS1/2), Shc and 14-3-3 proteins. Phosphorylation of IRSs proteins lead to the activation of two main signaling pathways: the PI3K-AKT/PKB pathway and the Ras-MAPK pathway. The result of activating the MAPK pathway is increased cellular proliferation, whereas activating the PI3K pathway inhibits apoptosis and stimulates protein synthesis. Phosphorylated IRS1 can activate the 85 kDa regulatory subunit of PI3K (PIK3R1), leading to activation of several downstream substrates, including protein AKT/PKB. AKT phosphorylation, in turn, enhances protein synthesis through mTOR activation and triggers the antiapoptotic effects of IGFIR through phosphorylation and inactivation of BAD. In parallel to PI3K-driven signaling, recruitment of Grb2/SOS by phosphorylated IRS1 or Shc leads to recruitment of Ras and activation of the ras-MAPK pathway. In addition to these two main signaling pathways IGF1R signals also through the Janus kinase/signal transducer and activator of transcription pathway (JAK/STAT). Phosphorylation of JAK proteins can lead to phosphorylation/activation of signal transducers and activators of transcription (STAT) proteins. In particular activation of STAT3, may be essential for the transforming activity of IGF1R. The JAK/STAT pathway activates gene transcription and may be responsible for the transforming activity. JNK kinases can also be activated by the IGF1R. IGF1 exerts inhibiting activities on JNK activation via phosphorylation and inhibition of MAP3K5/ASK1, which is able to directly associate with the IGF1R. When present in a hybrid receptor with INSR, binds IGF1. The sequence is that of Insulin-like growth factor 1 receptor (Igf1r) from Mus musculus (Mouse).